Here is a 184-residue protein sequence, read N- to C-terminus: Adenine phosphoribosyltransferase (184 aa).

This sequence belongs to the purine/pyrimidine phosphoribosyltransferase family. As to quaternary structure, homodimer.

The protein localises to the cytoplasm. It catalyses the reaction AMP + diphosphate = 5-phospho-alpha-D-ribose 1-diphosphate + adenine. It functions in the pathway purine metabolism; AMP biosynthesis via salvage pathway; AMP from adenine: step 1/1. Its function is as follows. Catalyzes a salvage reaction resulting in the formation of AMP, that is energically less costly than de novo synthesis. This is Adenine phosphoribosyltransferase from Paracidovorax citrulli (strain AAC00-1) (Acidovorax citrulli).